The sequence spans 199 residues: Peptidyl-tRNA hydrolase (199 aa).

Position 15 (tyrosine 15) interacts with tRNA. Residue histidine 20 is the Proton acceptor of the active site. The tRNA site is built by tyrosine 66, asparagine 68, and asparagine 114.

Belongs to the PTH family. As to quaternary structure, monomer.

The protein localises to the cytoplasm. The enzyme catalyses an N-acyl-L-alpha-aminoacyl-tRNA + H2O = an N-acyl-L-amino acid + a tRNA + H(+). Its function is as follows. Hydrolyzes ribosome-free peptidyl-tRNAs (with 1 or more amino acids incorporated), which drop off the ribosome during protein synthesis, or as a result of ribosome stalling. In terms of biological role, catalyzes the release of premature peptidyl moieties from peptidyl-tRNA molecules trapped in stalled 50S ribosomal subunits, and thus maintains levels of free tRNAs and 50S ribosomes. The polypeptide is Peptidyl-tRNA hydrolase (Burkholderia ambifaria (strain MC40-6)).